We begin with the raw amino-acid sequence, 184 residues long: ATP synthase subunit b, chloroplastic (184 aa).

The chain crosses the membrane as a helical span at residues 29–49 (INLINLILVLGILFYYGKGVL).

This sequence belongs to the ATPase B chain family. In terms of assembly, F-type ATPases have 2 components, F(1) - the catalytic core - and F(0) - the membrane proton channel. F(1) has five subunits: alpha(3), beta(3), gamma(1), delta(1), epsilon(1). F(0) has four main subunits: a(1), b(1), b'(1) and c(10-14). The alpha and beta chains form an alternating ring which encloses part of the gamma chain. F(1) is attached to F(0) by a central stalk formed by the gamma and epsilon chains, while a peripheral stalk is formed by the delta, b and b' chains.

Its subcellular location is the plastid. The protein resides in the chloroplast thylakoid membrane. F(1)F(0) ATP synthase produces ATP from ADP in the presence of a proton or sodium gradient. F-type ATPases consist of two structural domains, F(1) containing the extramembraneous catalytic core and F(0) containing the membrane proton channel, linked together by a central stalk and a peripheral stalk. During catalysis, ATP synthesis in the catalytic domain of F(1) is coupled via a rotary mechanism of the central stalk subunits to proton translocation. Its function is as follows. Component of the F(0) channel, it forms part of the peripheral stalk, linking F(1) to F(0). This is ATP synthase subunit b, chloroplastic from Adiantum capillus-veneris (Maidenhair fern).